A 123-amino-acid polypeptide reads, in one-letter code: Large-conductance mechanosensitive channel (123 aa).

The next 2 membrane-spanning stretches (helical) occupy residues 14–34 and 67–87; these read VIDMAVGIIVGAAFTSIVKSL and GSFLNAVINFLIISFVVFLMV.

The protein belongs to the MscL family. In terms of assembly, homopentamer.

Its subcellular location is the cell membrane. Functionally, channel that opens in response to stretch forces in the membrane lipid bilayer. May participate in the regulation of osmotic pressure changes within the cell. The protein is Large-conductance mechanosensitive channel of Limosilactobacillus reuteri (strain DSM 20016) (Lactobacillus reuteri).